The chain runs to 253 residues: Probable U2 small nuclear ribonucleoprotein A' (253 aa).

4 LRR repeats span residues 20–41 (NMRE…GVTR), 43–64 (QFDV…PTFS), 65–86 (RLNT…IATK), and 89–110 (NLKT…EPLA). The region spanning 123–161 (NPITHKDNYRMYMIYKLPTVRVIDFNRVRLTEREAAKKM) is the LRRCT domain. Disordered regions lie at residues 163-205 (KGKS…EDRE) and 232-253 (VPEK…AMES). Residues 169 to 182 (KARDAIQKSVHTED) are compositionally biased toward basic and acidic residues.

Belongs to the U2 small nuclear ribonucleoprotein A family. As to quaternary structure, interacts with rnp-3.

The protein resides in the nucleus. In terms of biological role, this protein is associated with sn-RNP U2. It helps the A' protein to bind stem loop IV of U2 snRNA. Required maternally for early embryonic development and zygotically for germline and somatic development. Has a role in the switch from mitosis to meiosis. Might function in alternative splicing. In Caenorhabditis elegans, this protein is Probable U2 small nuclear ribonucleoprotein A' (mog-2).